Consider the following 520-residue polypeptide: NAD(P)H-quinone oxidoreductase subunit 2 (520 aa).

Helical transmembrane passes span 26 to 46, 54 to 74, 91 to 111, 120 to 140, 144 to 164, 179 to 199, 220 to 240, 252 to 272, 288 to 308, 314 to 334, 342 to 362, 386 to 406, 421 to 441, and 474 to 494; these read AVLP…VDLA, WSPP…AMQW, LAIA…LISW, PIGE…LLCG, LVSV…LSGY, LLVG…LYGI, SALA…AVPF, PTPV…ALAI, LLFT…ALAQ, MLAY…VCGT, VLYM…IILF, LGLS…GFFG, LLVT…ISVI, and VALI…NPLF.

The protein belongs to the complex I subunit 2 family. In terms of assembly, NDH-1 can be composed of about 15 different subunits; different subcomplexes with different compositions have been identified which probably have different functions.

It is found in the cellular thylakoid membrane. The catalysed reaction is a plastoquinone + NADH + (n+1) H(+)(in) = a plastoquinol + NAD(+) + n H(+)(out). It carries out the reaction a plastoquinone + NADPH + (n+1) H(+)(in) = a plastoquinol + NADP(+) + n H(+)(out). In terms of biological role, NDH-1 shuttles electrons from an unknown electron donor, via FMN and iron-sulfur (Fe-S) centers, to quinones in the respiratory and/or the photosynthetic chain. The immediate electron acceptor for the enzyme in this species is believed to be plastoquinone. Couples the redox reaction to proton translocation, and thus conserves the redox energy in a proton gradient. Cyanobacterial NDH-1 also plays a role in inorganic carbon-concentration. The chain is NAD(P)H-quinone oxidoreductase subunit 2 from Prochlorococcus marinus (strain NATL2A).